The following is a 634-amino-acid chain: UPF0329 protein ECU11_2090 (634 aa).

2 stretches are compositionally biased toward basic and acidic residues: residues Arg354 to Gly365 and Gly397 to Glu407. The tract at residues Arg354–Glu438 is disordered. The segment covering Gly408 to Glu417 has biased composition (acidic residues).

Belongs to the UPF0329 family.

The sequence is that of UPF0329 protein ECU11_2090 from Encephalitozoon cuniculi (strain GB-M1) (Microsporidian parasite).